Reading from the N-terminus, the 201-residue chain is Holliday junction branch migration complex subunit RuvA (201 aa).

Positions 1 to 63 are domain I; that stretch reads MIEYVRGELA…EDAYVLYGFA (63 aa). The interval 64–142 is domain II; sequence DKQEREIFLL…TMGATVAGGS (79 aa). A flexible linker region spans residues 143–151; the sequence is ASAGMLLQS. The domain III stretch occupies residues 152-201; the sequence is ASVEVQEEAVAALTMLGFAAAPSQKVVLAILKEEPDAPVEKVIKLALKRL.

The protein belongs to the RuvA family. As to quaternary structure, homotetramer. Forms an RuvA(8)-RuvB(12)-Holliday junction (HJ) complex. HJ DNA is sandwiched between 2 RuvA tetramers; dsDNA enters through RuvA and exits via RuvB. An RuvB hexamer assembles on each DNA strand where it exits the tetramer. Each RuvB hexamer is contacted by two RuvA subunits (via domain III) on 2 adjacent RuvB subunits; this complex drives branch migration. In the full resolvosome a probable DNA-RuvA(4)-RuvB(12)-RuvC(2) complex forms which resolves the HJ.

It is found in the cytoplasm. Functionally, the RuvA-RuvB-RuvC complex processes Holliday junction (HJ) DNA during genetic recombination and DNA repair, while the RuvA-RuvB complex plays an important role in the rescue of blocked DNA replication forks via replication fork reversal (RFR). RuvA specifically binds to HJ cruciform DNA, conferring on it an open structure. The RuvB hexamer acts as an ATP-dependent pump, pulling dsDNA into and through the RuvAB complex. HJ branch migration allows RuvC to scan DNA until it finds its consensus sequence, where it cleaves and resolves the cruciform DNA. This chain is Holliday junction branch migration complex subunit RuvA, found in Bacteroides thetaiotaomicron (strain ATCC 29148 / DSM 2079 / JCM 5827 / CCUG 10774 / NCTC 10582 / VPI-5482 / E50).